Here is a 371-residue protein sequence, read N- to C-terminus: N-acetyldiaminopimelate deacetylase (371 aa).

Asp-68 is an active-site residue. Glu-127 functions as the Proton acceptor in the catalytic mechanism.

This sequence belongs to the peptidase M20A family. N-acetyldiaminopimelate deacetylase subfamily.

It catalyses the reaction N-acetyl-(2S,6S)-2,6-diaminopimelate + H2O = (2S,6S)-2,6-diaminopimelate + acetate. It functions in the pathway amino-acid biosynthesis; L-lysine biosynthesis via DAP pathway; LL-2,6-diaminopimelate from (S)-tetrahydrodipicolinate (acetylase route): step 3/3. Functionally, catalyzes the conversion of N-acetyl-diaminopimelate to diaminopimelate and acetate. This Listeria welshimeri serovar 6b (strain ATCC 35897 / DSM 20650 / CCUG 15529 / CIP 8149 / NCTC 11857 / SLCC 5334 / V8) protein is N-acetyldiaminopimelate deacetylase.